Consider the following 332-residue polypeptide: Phosphate acyltransferase (332 aa).

This sequence belongs to the PlsX family. As to quaternary structure, homodimer. Probably interacts with PlsY.

The protein resides in the cytoplasm. It catalyses the reaction a fatty acyl-[ACP] + phosphate = an acyl phosphate + holo-[ACP]. It functions in the pathway lipid metabolism; phospholipid metabolism. Catalyzes the reversible formation of acyl-phosphate (acyl-PO(4)) from acyl-[acyl-carrier-protein] (acyl-ACP). This enzyme utilizes acyl-ACP as fatty acyl donor, but not acyl-CoA. In Oceanobacillus iheyensis (strain DSM 14371 / CIP 107618 / JCM 11309 / KCTC 3954 / HTE831), this protein is Phosphate acyltransferase.